The sequence spans 121 residues: Tachykinin-3 (121 aa).

Positions 1-16 (MRIMLLFTAILAFSLA) are cleaved as a signal peptide. A propeptide spanning residues 17–78 (QSFGAVCKEP…TDPKESTSPE (62 aa)) is cleaved from the precursor. At Met90 the chain carries Methionine amide. The tract at residues 93-121 (RSVQPDSPTDVNQENVPSFGILKYPPRAE) is disordered. Positions 94-121 (SVQPDSPTDVNQENVPSFGILKYPPRAE) are excised as a propeptide. Residues 96 to 108 (QPDSPTDVNQENV) show a composition bias toward polar residues.

Belongs to the tachykinin family.

It is found in the secreted. Tachykinins are active peptides which excite neurons, evoke behavioral responses, are potent vasodilators and secretagogues, and contract (directly or indirectly) many smooth muscles. Is a critical central regulator of gonadal function. The sequence is that of Tachykinin-3 (TAC3) from Homo sapiens (Human).